We begin with the raw amino-acid sequence, 164 residues long: Protein-export protein SecB (164 aa).

It belongs to the SecB family. In terms of assembly, homotetramer, a dimer of dimers. One homotetramer interacts with 1 SecA dimer.

Its subcellular location is the cytoplasm. Functionally, one of the proteins required for the normal export of preproteins out of the cell cytoplasm. It is a molecular chaperone that binds to a subset of precursor proteins, maintaining them in a translocation-competent state. It also specifically binds to its receptor SecA. The sequence is that of Protein-export protein SecB from Burkholderia orbicola (strain MC0-3).